Reading from the N-terminus, the 736-residue chain is MAIVALGVVYGDIGTSPLYTAQTFLAGQGGLGSVDREAVLGMLSLVFWSITLITTVKYVLIAMRIDNNGEGGIFALYSLIRKYGAWLAIPAMLGGAAFLADSVLTPAVSISSAVEGLQTLPPLEGLFDENPSLTLMITVVIIVILFSVQSRGTESIGKVFGSMVLVWFGFLAIVGVTNLSNDWSVFEALNPVYGIKFLFSPNNAAGIALMGTVFLSTTGAEALYSDMGHVGRGNIYFTWPFIKVALVLNYFGQGAWMLANSDNPQYTAMESLNPFFQMMSPNVRYLAVILSVSAGVIASQALITGAFTMVSEATRLNWMPHLQVRYPARTRGQLYIPVVNGVLCVSTLAVLAIFKDSEHISAAYGLALTITMITTTVLLGVYLWHSGKRVGAIVFTVLFLAIQAMFFIASMAKFLHGGWFTMLLTAAILFVMYTWNEGTKLERAQRRHMRPNDFLPALDKLHSDFRIPYFADNIVYLTSDSETKRLDTDIFFSIFADHPKRARAWWAVSVETTDEPFTREYSVEDFGTNYIYRVRFRLGFKVSQSIPAYIHQIMHDLSKTGELPKQKSIYPKVDADPDIGTIRYVLIHKALMPESKVSARGALSLQAKYAIRHMAGSPVKWFGLAPYNPLVEVQPLFVSTRRPPRLKRTDTAKTIPTPTPTRAVADPAAVPDPMDTTSGLGRLVQELDAAVSAEARKTAEAAAADAPAEQGDKGDKGKAENGKPAAKPQRSAKQKR.

Transmembrane regions (helical) follow at residues 1–21 (MAIV…LYTA), 42–62 (MLSL…VLIA), 84–104 (GAWL…DSVL), 126–146 (LFDE…VILF), 156–176 (IGKV…IVGV), 204–224 (AAGI…EALY), 239–259 (WPFI…WMLA), 287–307 (AVIL…TGAF), 334–354 (LYIP…LAIF), 364–384 (YGLA…VYLW), 390–410 (VGAI…FIAS), and 414–434 (FLHG…VMYT). Disordered stretches follow at residues 649 to 678 (TDTA…DTTS) and 693 to 736 (AEAR…KQKR). 2 stretches are compositionally biased toward low complexity: residues 660-677 (PTRA…MDTT) and 700-709 (EAAAADAPAE). A compositionally biased stretch (basic and acidic residues) spans 710–721 (QGDKGDKGKAEN).

Belongs to the HAK/KUP transporter (TC 2.A.72) family.

Its subcellular location is the cell membrane. The catalysed reaction is K(+)(in) + H(+)(in) = K(+)(out) + H(+)(out). Its function is as follows. Transport of potassium into the cell. Likely operates as a K(+):H(+) symporter. This chain is Probable potassium transport system protein Kup 2, found in Bifidobacterium longum (strain NCC 2705).